Consider the following 639-residue polypeptide: Exocyst complex component EXO70E2 (639 aa).

It belongs to the EXO70 family. As to quaternary structure, component of the exocyst complex and of the exocyst-positive organelle (EXPO). Interacts with SEC6, SEC10A and SEC10B. In terms of tissue distribution, expressed in roots, in the root-hair zone, both in root hair and nonhair cells.

The protein resides in the secreted. It is found in the extracellular exosome. It localises to the cell membrane. Its subcellular location is the cytoplasm. The protein localises to the endomembrane system. Functionally, influences the subcellular localization patterns of other exocyst complex proteins (e.g. SEC5A, SEC15A, SEC15B and EXO84B) leading to their recruitment to exocyst, well-defined large punctate structures throughout the cytosol. Essential component for the formation and the recruitment of exocyst subunits to the exocyst-positive organelle (EXPO), a secreted double membrane structure also called extracellular exosome, that acts as a sequester for cytosolic proteins to release them into the apoplast. In Arabidopsis thaliana (Mouse-ear cress), this protein is Exocyst complex component EXO70E2.